Here is a 355-residue protein sequence, read N- to C-terminus: Aurora kinase (355 aa).

Positions phenylalanine 89–isoleucine 340 constitute a Protein kinase domain. ATP-binding positions include leucine 95–valine 103 and lysine 118. Aspartate 212 serves as the catalytic Proton acceptor.

The protein belongs to the protein kinase superfamily. Ser/Thr protein kinase family. Aurora subfamily. Component of the CPC complex at least composed of ark1, bir1 and pic1. Interacts with the mitotic checkpoint complex (MCC) subunit mad3.

The protein resides in the nucleus. Its subcellular location is the cytoplasm. It is found in the cytoskeleton. The protein localises to the spindle. The enzyme catalyses L-seryl-[protein] + ATP = O-phospho-L-seryl-[protein] + ADP + H(+). It carries out the reaction L-threonyl-[protein] + ATP = O-phospho-L-threonyl-[protein] + ADP + H(+). Component of the chromosomal passenger complex (CPC), a complex that acts as a key regulator of chromosome segregation and cytokinesis. Has a role in error-correction of aberrent kinetochore-microtubule attachments to ensure that sister kinetochores become bioriented and connect to opposite poles by promoting spindle assembly checkpoint signaling. Ark1 is also required for phosphorylation of histone H3 that accompanies chromosome condensation and condensin recruitment to mitotic chromatin. In Schizosaccharomyces pombe (strain 972 / ATCC 24843) (Fission yeast), this protein is Aurora kinase (ark1).